We begin with the raw amino-acid sequence, 617 residues long: Dihydroxy-acid dehydratase (617 aa).

D81 contacts Mg(2+). C122 serves as a coordination point for [2Fe-2S] cluster. Positions 123 and 124 each coordinate Mg(2+). An N6-carboxylysine modification is found at K124. C197 is a binding site for [2Fe-2S] cluster. Mg(2+) is bound at residue E494. S520 acts as the Proton acceptor in catalysis.

This sequence belongs to the IlvD/Edd family. Homodimer. [2Fe-2S] cluster serves as cofactor. It depends on Mg(2+) as a cofactor.

The catalysed reaction is (2R)-2,3-dihydroxy-3-methylbutanoate = 3-methyl-2-oxobutanoate + H2O. It catalyses the reaction (2R,3R)-2,3-dihydroxy-3-methylpentanoate = (S)-3-methyl-2-oxopentanoate + H2O. Its pathway is amino-acid biosynthesis; L-isoleucine biosynthesis; L-isoleucine from 2-oxobutanoate: step 3/4. The protein operates within amino-acid biosynthesis; L-valine biosynthesis; L-valine from pyruvate: step 3/4. Functions in the biosynthesis of branched-chain amino acids. Catalyzes the dehydration of (2R,3R)-2,3-dihydroxy-3-methylpentanoate (2,3-dihydroxy-3-methylvalerate) into 2-oxo-3-methylpentanoate (2-oxo-3-methylvalerate) and of (2R)-2,3-dihydroxy-3-methylbutanoate (2,3-dihydroxyisovalerate) into 2-oxo-3-methylbutanoate (2-oxoisovalerate), the penultimate precursor to L-isoleucine and L-valine, respectively. The chain is Dihydroxy-acid dehydratase from Parafrankia sp. (strain EAN1pec).